Here is a 147-residue protein sequence, read N- to C-terminus: 3-dehydroquinate dehydratase (147 aa).

Tyr-23 functions as the Proton acceptor in the catalytic mechanism. Substrate-binding residues include Asn-74, His-80, and Asp-87. His-100 acts as the Proton donor in catalysis. Substrate is bound by residues 101–102 (LS) and Arg-111.

This sequence belongs to the type-II 3-dehydroquinase family. Homododecamer.

The catalysed reaction is 3-dehydroquinate = 3-dehydroshikimate + H2O. The protein operates within metabolic intermediate biosynthesis; chorismate biosynthesis; chorismate from D-erythrose 4-phosphate and phosphoenolpyruvate: step 3/7. Its function is as follows. Catalyzes a trans-dehydration via an enolate intermediate. This chain is 3-dehydroquinate dehydratase, found in Clostridium botulinum (strain Okra / Type B1).